We begin with the raw amino-acid sequence, 360 residues long: Phospho-N-acetylmuramoyl-pentapeptide-transferase (360 aa).

10 helical membrane-spanning segments follow: residues 26–46 (AILS…IMIK), 70–90 (GTPT…ILLW), 94–114 (SNPY…IGFV), 132–152 (WKYF…YAYG), 168–188 (IMPQ…VGTS), 199–219 (GLAI…AWAT), 236–256 (ASEL…FLWF), 263–283 (VFMG…IAVL), 288–308 (LILV…ILQV), and 338–358 (VIVR…ATLK).

Belongs to the glycosyltransferase 4 family. MraY subfamily. Mg(2+) serves as cofactor.

The protein localises to the cell inner membrane. It catalyses the reaction UDP-N-acetyl-alpha-D-muramoyl-L-alanyl-gamma-D-glutamyl-meso-2,6-diaminopimeloyl-D-alanyl-D-alanine + di-trans,octa-cis-undecaprenyl phosphate = di-trans,octa-cis-undecaprenyl diphospho-N-acetyl-alpha-D-muramoyl-L-alanyl-D-glutamyl-meso-2,6-diaminopimeloyl-D-alanyl-D-alanine + UMP. It functions in the pathway cell wall biogenesis; peptidoglycan biosynthesis. Functionally, catalyzes the initial step of the lipid cycle reactions in the biosynthesis of the cell wall peptidoglycan: transfers peptidoglycan precursor phospho-MurNAc-pentapeptide from UDP-MurNAc-pentapeptide onto the lipid carrier undecaprenyl phosphate, yielding undecaprenyl-pyrophosphoryl-MurNAc-pentapeptide, known as lipid I. This is Phospho-N-acetylmuramoyl-pentapeptide-transferase from Vibrio campbellii (strain ATCC BAA-1116).